Reading from the N-terminus, the 209-residue chain is dITP/XTP pyrophosphatase (209 aa).

Residue 7–12 (SSHGYK) coordinates substrate. Asp-70 (proton acceptor) is an active-site residue. Asp-70 is a Mg(2+) binding site. Substrate is bound by residues Ser-71, 154–157 (FGYD), Lys-177, and 182–183 (HR).

It belongs to the HAM1 NTPase family. Homodimer. The cofactor is Mg(2+).

It carries out the reaction XTP + H2O = XMP + diphosphate + H(+). It catalyses the reaction dITP + H2O = dIMP + diphosphate + H(+). The catalysed reaction is ITP + H2O = IMP + diphosphate + H(+). In terms of biological role, pyrophosphatase that catalyzes the hydrolysis of nucleoside triphosphates to their monophosphate derivatives, with a high preference for the non-canonical purine nucleotides XTP (xanthosine triphosphate), dITP (deoxyinosine triphosphate) and ITP. Seems to function as a house-cleaning enzyme that removes non-canonical purine nucleotides from the nucleotide pool, thus preventing their incorporation into DNA/RNA and avoiding chromosomal lesions. This Chlamydia trachomatis serovar A (strain ATCC VR-571B / DSM 19440 / HAR-13) protein is dITP/XTP pyrophosphatase.